Here is an 813-residue protein sequence, read N- to C-terminus: Serine/threonine-protein kinase kin-29 (813 aa).

The region spanning Tyr-18–Met-269 is the Protein kinase domain. ATP contacts are provided by residues Ile-24–Val-32 and Lys-47. Asp-140 acts as the Proton acceptor in catalysis. The interval Leu-383–Lys-412 is disordered. Residues Cys-388–Asp-400 show a composition bias toward acidic residues.

It belongs to the protein kinase superfamily. CAMK Ser/Thr protein kinase family. SNF1 subfamily. In terms of assembly, interacts with tax-6. The cofactor is Mg(2+). Post-translationally, autophosphorylated. Elevated cAMP levels appears to act via PKA to directly or indirectly phosphorylate multiple sites on kin-29 and inhibit function.

Its subcellular location is the cytoplasm. It localises to the nucleus. It carries out the reaction L-seryl-[protein] + ATP = O-phospho-L-seryl-[protein] + ADP + H(+). The catalysed reaction is L-threonyl-[protein] + ATP = O-phospho-L-threonyl-[protein] + ADP + H(+). Functionally, regulates chemoreceptor expression by phosphorylating the hda-4 class II histone deacetylase (HDAC) and inhibiting the gene repression functions of hda-4 and the mef-2 transcription factor, enabling the correct sensing and transduction of food signals. Role in determining body size, the dauer decision and serotonin-mediated egg laying. May modulate the Sma/Mab pathway and regulates development in the later larval stages. This Caenorhabditis briggsae protein is Serine/threonine-protein kinase kin-29.